Reading from the N-terminus, the 323-residue chain is Methionyl-tRNA formyltransferase (323 aa).

Position 113 to 116 (113 to 116 (SLLP)) interacts with (6S)-5,6,7,8-tetrahydrofolate.

Belongs to the Fmt family.

The catalysed reaction is L-methionyl-tRNA(fMet) + (6R)-10-formyltetrahydrofolate = N-formyl-L-methionyl-tRNA(fMet) + (6S)-5,6,7,8-tetrahydrofolate + H(+). Attaches a formyl group to the free amino group of methionyl-tRNA(fMet). The formyl group appears to play a dual role in the initiator identity of N-formylmethionyl-tRNA by promoting its recognition by IF2 and preventing the misappropriation of this tRNA by the elongation apparatus. In Porphyromonas gingivalis (strain ATCC BAA-308 / W83), this protein is Methionyl-tRNA formyltransferase.